Consider the following 296-residue polypeptide: GTP cyclohydrolase FolE2 (296 aa).

Belongs to the GTP cyclohydrolase IV family.

The enzyme catalyses GTP + H2O = 7,8-dihydroneopterin 3'-triphosphate + formate + H(+). Its pathway is cofactor biosynthesis; 7,8-dihydroneopterin triphosphate biosynthesis; 7,8-dihydroneopterin triphosphate from GTP: step 1/1. Functionally, converts GTP to 7,8-dihydroneopterin triphosphate. The polypeptide is GTP cyclohydrolase FolE2 (Delftia acidovorans (strain DSM 14801 / SPH-1)).